Consider the following 334-residue polypeptide: Phenylalanine--tRNA ligase alpha subunit (334 aa).

Glutamate 249 is a Mg(2+) binding site.

The protein belongs to the class-II aminoacyl-tRNA synthetase family. Phe-tRNA synthetase alpha subunit type 1 subfamily. Tetramer of two alpha and two beta subunits. The cofactor is Mg(2+).

Its subcellular location is the cytoplasm. The enzyme catalyses tRNA(Phe) + L-phenylalanine + ATP = L-phenylalanyl-tRNA(Phe) + AMP + diphosphate + H(+). The polypeptide is Phenylalanine--tRNA ligase alpha subunit (Desulfosudis oleivorans (strain DSM 6200 / JCM 39069 / Hxd3) (Desulfococcus oleovorans)).